Here is a 128-residue protein sequence, read N- to C-terminus: Aspartate 1-decarboxylase (128 aa).

Ser25 (schiff-base intermediate with substrate; via pyruvic acid) is an active-site residue. Position 25 is a pyruvic acid (Ser) (Ser25). Thr57 is a binding site for substrate. Residue Tyr58 is the Proton donor of the active site. 73 to 75 (GSA) provides a ligand contact to substrate.

It belongs to the PanD family. In terms of assembly, heterooctamer of four alpha and four beta subunits. Pyruvate is required as a cofactor. Is synthesized initially as an inactive proenzyme, which is activated by self-cleavage at a specific serine bond to produce a beta-subunit with a hydroxyl group at its C-terminus and an alpha-subunit with a pyruvoyl group at its N-terminus.

Its subcellular location is the cytoplasm. The catalysed reaction is L-aspartate + H(+) = beta-alanine + CO2. The protein operates within cofactor biosynthesis; (R)-pantothenate biosynthesis; beta-alanine from L-aspartate: step 1/1. Functionally, catalyzes the pyruvoyl-dependent decarboxylation of aspartate to produce beta-alanine. The protein is Aspartate 1-decarboxylase of Burkholderia vietnamiensis (strain G4 / LMG 22486) (Burkholderia cepacia (strain R1808)).